Consider the following 211-residue polypeptide: Ribonuclease HII (211 aa).

Positions 2 to 211 (MLILGVDEAG…TAQRLKASSV (210 aa)) constitute an RNase H type-2 domain. A divalent metal cation-binding residues include aspartate 8, glutamate 9, and aspartate 106.

It belongs to the RNase HII family. The cofactor is Mn(2+). Requires Mg(2+) as cofactor.

Its subcellular location is the cytoplasm. The enzyme catalyses Endonucleolytic cleavage to 5'-phosphomonoester.. In terms of biological role, endonuclease that specifically degrades the RNA of RNA-DNA hybrids. The protein is Ribonuclease HII of Methanothrix thermoacetophila (strain DSM 6194 / JCM 14653 / NBRC 101360 / PT) (Methanosaeta thermophila).